Here is an 885-residue protein sequence, read N- to C-terminus: Pyruvate, phosphate dikinase (885 aa).

The N-terminal stretch occupies residues 1–342 (MQRVYAFEDG…LYMLQTRNGK (342 aa)). An ATP-binding site is contributed by R91. Residues 343-399 (MNATATVRTGVDMVEEGLITKEQAIMRIAPQSVDQLLHKNMPANYAEAPLVKGLPAS) are linker 1. Positions 400 to 497 (PGAATGAVVF…EVHEGDILTI (98 aa)) are central. Residue H454 is the Tele-phosphohistidine intermediate of the active site. The linker 2 stretch occupies residues 498 to 533 (DGSTGCVYKGEVPLEEPQVGSGYFGTILKWANEIKK). The C-terminal stretch occupies residues 534 to 885 (IGVFANADLP…QAQIRHPREN (352 aa)). The substrate site is built by R561, R617, E752, G773, T774, N775, and D776. E752 contacts Mg(2+). D776 contacts Mg(2+). Residue C839 is the Proton donor of the active site.

The protein belongs to the PEP-utilizing enzyme family. In terms of assembly, homodimer. Requires Mg(2+) as cofactor.

It catalyses the reaction pyruvate + phosphate + ATP = phosphoenolpyruvate + AMP + diphosphate + H(+). Catalyzes the dephosphorylation of phosphoenolpyruvate and diphosphate to produce ATP. The protein is Pyruvate, phosphate dikinase of Entamoeba histolytica (strain ATCC 30459 / HM-1:IMSS / ABRM).